We begin with the raw amino-acid sequence, 351 residues long: Photosystem II D2 protein (351 aa).

Residues 39 to 59 traverse the membrane as a helical segment; that stretch reads TAYLAVGGWMTGTTFVTSWYT. Histidine 116 serves as a coordination point for chlorophyll a. The chain crosses the membrane as a helical span at residues 123–139; that stretch reads GFCLRQFEIARLVGIRP. Pheophytin a is bound by residues glutamine 128 and asparagine 141. Residues 151–164 form a helical membrane-spanning segment; it reads VFVSVFLLYPLGQA. Histidine 196 contributes to the chlorophyll a binding site. A helical transmembrane segment spans residues 206 to 226; it reads GALLCAIHGATVENTLFEDGD. Residues histidine 213 and phenylalanine 260 each coordinate a plastoquinone. Histidine 213 is a binding site for Fe cation. Histidine 267 provides a ligand contact to Fe cation. A helical transmembrane segment spans residues 277–293; it reads GLWTSAIGIVGLALNLR.

This sequence belongs to the reaction center PufL/M/PsbA/D family. PSII is composed of 1 copy each of membrane proteins PsbA, PsbB, PsbC, PsbD, PsbE, PsbF, PsbH, PsbI, PsbJ, PsbK, PsbL, PsbM, PsbT, PsbX, PsbY, PsbZ, Psb30/Ycf12, at least 3 peripheral proteins of the oxygen-evolving complex and a large number of cofactors. It forms dimeric complexes. Requires The D1/D2 heterodimer binds P680, chlorophylls that are the primary electron donor of PSII, and subsequent electron acceptors. It shares a non-heme iron and each subunit binds pheophytin, quinone, additional chlorophylls, carotenoids and lipids. There is also a Cl(-1) ion associated with D1 and D2, which is required for oxygen evolution. The PSII complex binds additional chlorophylls, carotenoids and specific lipids. as cofactor.

It is found in the plastid. The protein localises to the chloroplast thylakoid membrane. The catalysed reaction is 2 a plastoquinone + 4 hnu + 2 H2O = 2 a plastoquinol + O2. In terms of biological role, photosystem II (PSII) is a light-driven water:plastoquinone oxidoreductase that uses light energy to abstract electrons from H(2)O, generating O(2) and a proton gradient subsequently used for ATP formation. It consists of a core antenna complex that captures photons, and an electron transfer chain that converts photonic excitation into a charge separation. The D1/D2 (PsbA/PsbD) reaction center heterodimer binds P680, the primary electron donor of PSII as well as several subsequent electron acceptors. D2 is needed for assembly of a stable PSII complex. This chain is Photosystem II D2 protein, found in Phaeodactylum tricornutum (strain CCAP 1055/1).